The chain runs to 850 residues: Receptor-like protein kinase ANXUR1 (850 aa).

Residues 1–26 form the signal peptide; it reads MSGKTRILFFLTCLSFLLVFPTRSNG. At 27–429 the chain is on the extracellular side; it reads QDLALSCGTS…KKEFKNEKRH (403 aa). N-linked (GlcNAc...) asparagine glycosylation is found at Asn114, Asn132, Asn292, Asn302, and Asn330. Residues 430 to 450 traverse the membrane as a helical segment; it reads AFIIGSAGGVLAVLIGALCFT. The Cytoplasmic portion of the chain corresponds to 451-850; sequence AYKKKQGYQG…FSQIVNPKGR (400 aa). The Protein kinase domain occupies 517 to 790; that stretch reads FDDSNVIGVG…GDVLWNLEFA (274 aa). ATP-binding positions include 523–531 and Lys545; that span reads IGVGGFGKV. Asp641 (proton acceptor) is an active-site residue. The disordered stretch occupies residues 796–850; sequence TADGTRHRTPNNGGSSEDLGRGGMAVNVAGRDDVSDLSSEDNTEIFSQIVNPKGR. Positions 839 to 850 are enriched in polar residues; the sequence is EIFSQIVNPKGR.

The protein belongs to the protein kinase superfamily. Ser/Thr protein kinase family. As to expression, expressed in pollen, but not in pistils or seedlings.

The protein localises to the cell membrane. It catalyses the reaction L-seryl-[protein] + ATP = O-phospho-L-seryl-[protein] + ADP + H(+). The catalysed reaction is L-threonyl-[protein] + ATP = O-phospho-L-threonyl-[protein] + ADP + H(+). In terms of biological role, receptor-like protein kinase that controls pollen tube behavior by directing rupture at proper timing to release the sperm cell. The protein is Receptor-like protein kinase ANXUR1 (ANX1) of Arabidopsis thaliana (Mouse-ear cress).